The following is a 124-amino-acid chain: Holo-[acyl-carrier-protein] synthase (124 aa).

Mg(2+) contacts are provided by aspartate 8 and glutamate 56.

Belongs to the P-Pant transferase superfamily. AcpS family. It depends on Mg(2+) as a cofactor.

The protein resides in the cytoplasm. It catalyses the reaction apo-[ACP] + CoA = holo-[ACP] + adenosine 3',5'-bisphosphate + H(+). In terms of biological role, transfers the 4'-phosphopantetheine moiety from coenzyme A to a Ser of acyl-carrier-protein. This is Holo-[acyl-carrier-protein] synthase from Clostridium acetobutylicum (strain ATCC 824 / DSM 792 / JCM 1419 / IAM 19013 / LMG 5710 / NBRC 13948 / NRRL B-527 / VKM B-1787 / 2291 / W).